A 1380-amino-acid polypeptide reads, in one-letter code: Receptor-type adenylate cyclase A (1380 aa).

The Cytoplasmic segment spans residues 1–34; that stretch reads MAMQIRPSLGGCLRHGGAGDHAARRLSRLRAAKV. The chain crosses the membrane as a helical span at residues 35–55; sequence FVPTAVVCVLLCCAPWVMAEI. Residues 56 to 891 lie on the Extracellular side of the membrane; sequence TNDAEREPVY…SHALTPAQRN (836 aa). N-linked (GlcNAc...) asparagine glycosylation is found at asparagine 422, asparagine 478, asparagine 497, and asparagine 567. A helical membrane pass occupies residues 892–912; sequence GLIAGCVVGAVVLIATCTLLL. Topologically, residues 913–1380 are cytoplasmic; sequence YCCMDNRNND…NPHYARHAFE (468 aa). The region spanning 933–1087 is the Guanylate cyclase domain; the sequence is TLLFTDIESS…DTSNMAARTE (155 aa). Aspartate 938 and aspartate 981 together coordinate Mg(2+). The segment at 1270–1298 is disordered; that stretch reads LAREGDSAAGGVRPRLPGSPVTSLPAGGS.

Belongs to the adenylyl cyclase class-3 family. The cofactor is Mg(2+).

The protein localises to the membrane. It catalyses the reaction ATP = 3',5'-cyclic AMP + diphosphate. Its function is as follows. Could act as a receptor for an unknown ligand. This chain is Receptor-type adenylate cyclase A (RAC-A), found in Leishmania donovani.